The chain runs to 473 residues: Photosystem II CP43 reaction center protein (473 aa).

Positions 1-14 are excised as a propeptide; the sequence is MKTLYSLRRSYPVE. Thr-15 bears the N-acetylthreonine mark. Phosphothreonine is present on Thr-15. 5 helical membrane-spanning segments follow: residues 69–93, 134–155, 178–200, 255–275, and 291–312; these read LFEVAHFVPEKPMYEQGLILLPHLA, LIGPETLEESFPFFGYVWKDKN, KALYFGGLYDTWAPGGGDVRKIT, KPFAWARRAFVWSGEAYLSYS, and WFNNTAYPSEFYGPTGPEASQA. Glu-367 is a binding site for [CaMn4O5] cluster. A helical membrane pass occupies residues 447–471; it reads RARAAAAGFEKGIDRDTEPVLFMNP.

Belongs to the PsbB/PsbC family. PsbC subfamily. PSII is composed of 1 copy each of membrane proteins PsbA, PsbB, PsbC, PsbD, PsbE, PsbF, PsbH, PsbI, PsbJ, PsbK, PsbL, PsbM, PsbT, PsbX, PsbY, PsbZ, Psb30/Ycf12, at least 3 peripheral proteins of the oxygen-evolving complex and a large number of cofactors. It forms dimeric complexes. Requires Binds multiple chlorophylls and provides some of the ligands for the Ca-4Mn-5O cluster of the oxygen-evolving complex. It may also provide a ligand for a Cl- that is required for oxygen evolution. PSII binds additional chlorophylls, carotenoids and specific lipids. as cofactor.

The protein resides in the plastid. It localises to the chloroplast thylakoid membrane. Its function is as follows. One of the components of the core complex of photosystem II (PSII). It binds chlorophyll and helps catalyze the primary light-induced photochemical processes of PSII. PSII is a light-driven water:plastoquinone oxidoreductase, using light energy to abstract electrons from H(2)O, generating O(2) and a proton gradient subsequently used for ATP formation. This chain is Photosystem II CP43 reaction center protein, found in Zygnema circumcarinatum (Green alga).